Consider the following 84-residue polypeptide: ATP synthase subunit c (84 aa).

The next 2 helical transmembrane spans lie at 9–29 and 54–74; these read IFGS…GFSL and IVAG…LLFI.

It belongs to the ATPase C chain family. F-type ATPases have 2 components, F(1) - the catalytic core - and F(0) - the membrane proton channel. F(1) has five subunits: alpha(3), beta(3), gamma(1), delta(1), epsilon(1). F(0) has three main subunits: a(1), b(2) and c(10-14). The alpha and beta chains form an alternating ring which encloses part of the gamma chain. F(1) is attached to F(0) by a central stalk formed by the gamma and epsilon chains, while a peripheral stalk is formed by the delta and b chains.

The protein localises to the cell inner membrane. F(1)F(0) ATP synthase produces ATP from ADP in the presence of a proton or sodium gradient. F-type ATPases consist of two structural domains, F(1) containing the extramembraneous catalytic core and F(0) containing the membrane proton channel, linked together by a central stalk and a peripheral stalk. During catalysis, ATP synthesis in the catalytic domain of F(1) is coupled via a rotary mechanism of the central stalk subunits to proton translocation. Its function is as follows. Key component of the F(0) channel; it plays a direct role in translocation across the membrane. A homomeric c-ring of between 10-14 subunits forms the central stalk rotor element with the F(1) delta and epsilon subunits. The polypeptide is ATP synthase subunit c (Histophilus somni (strain 2336) (Haemophilus somnus)).